Here is a 482-residue protein sequence, read N- to C-terminus: Sensor histidine kinase CusS (482 aa).

Topologically, residues 1–15 (MVSKPFQRPFSLATR) are cytoplasmic. The chain crosses the membrane as a helical span at residues 16 to 36 (LTFFISLATIAAFFAFAWIMI). Topologically, residues 37–186 (HSVKVHFAEQ…LHYINDLMNK (150 aa)) are periplasmic. Residues 187–207 (LIMTASVISILIVFIVLLAVH) traverse the membrane as a helical segment. The HAMP domain maps to 207–260 (HKGHAPIRSVSRQIQNITSKDLDVRLDPQTVPIELEQLVLSFNHMIERIEDVFT). Residues 208 to 482 (KGHAPIRSVS…RFVIVLPERG (275 aa)) lie on the Cytoplasmic side of the membrane. Positions 268–482 (DIAHEIRTPI…RFVIVLPERG (215 aa)) constitute a Histidine kinase domain. H271 carries the post-translational modification Phosphohistidine; by autocatalysis.

In terms of processing, autophosphorylated.

The protein localises to the cell inner membrane. The enzyme catalyses ATP + protein L-histidine = ADP + protein N-phospho-L-histidine.. In terms of biological role, member of the two-component regulatory system CusS/CusR involved in response to copper and silver. Acts as a copper/silver ion sensor. Activates CusR by phosphorylation. In Escherichia coli O157:H7, this protein is Sensor histidine kinase CusS (cusS).